The sequence spans 663 residues: Meiotically up-regulated gene 60 protein (663 aa).

One can recognise a KH domain in the interval 578–644 (PAEMHFYVPE…SENLWAVRSL (67 aa)).

Its subcellular location is the cytoplasm. The protein resides in the nucleus. The protein localises to the cytoskeleton. It is found in the microtubule organizing center. It localises to the spindle pole body. In terms of biological role, has a role in meiosis. In Schizosaccharomyces pombe (strain 972 / ATCC 24843) (Fission yeast), this protein is Meiotically up-regulated gene 60 protein (mug60).